A 552-amino-acid chain; its full sequence is Thermosome subunit beta (552 aa).

This sequence belongs to the TCP-1 chaperonin family. In terms of assembly, forms a Heterooligomeric complex of two stacked nine-membered rings; one of alpha and the other of beta subunits. In terms of processing, the N-terminus is blocked.

In terms of biological role, molecular chaperone; binds unfolded polypeptides in vitro, and has a weak ATPase activity. The polypeptide is Thermosome subunit beta (thsB) (Sulfurisphaera tokodaii (strain DSM 16993 / JCM 10545 / NBRC 100140 / 7) (Sulfolobus tokodaii)).